The chain runs to 295 residues: UDP-N-acetylenolpyruvoylglucosamine reductase (295 aa).

An FAD-binding PCMH-type domain is found at Val26 to Ser189. Residue Arg169 is part of the active site. Cys218 serves as the catalytic Proton donor. The active site involves Glu288.

This sequence belongs to the MurB family. FAD is required as a cofactor.

It localises to the cytoplasm. The catalysed reaction is UDP-N-acetyl-alpha-D-muramate + NADP(+) = UDP-N-acetyl-3-O-(1-carboxyvinyl)-alpha-D-glucosamine + NADPH + H(+). The protein operates within cell wall biogenesis; peptidoglycan biosynthesis. Functionally, cell wall formation. The protein is UDP-N-acetylenolpyruvoylglucosamine reductase of Wolbachia sp. subsp. Drosophila simulans (strain wRi).